The sequence spans 273 residues: Shikimate dehydrogenase (NADP(+)) (273 aa).

Residues 15–17 (SLS) and T62 contribute to the shikimate site. K66 acts as the Proton acceptor in catalysis. Residue E78 participates in NADP(+) binding. Residues N87 and D102 each contribute to the shikimate site. Residues 126–130 (GAGGA), 149–154 (NRTPER), I215, and G238 each bind NADP(+).

The protein belongs to the shikimate dehydrogenase family. Homodimer.

The enzyme catalyses shikimate + NADP(+) = 3-dehydroshikimate + NADPH + H(+). Its pathway is metabolic intermediate biosynthesis; chorismate biosynthesis; chorismate from D-erythrose 4-phosphate and phosphoenolpyruvate: step 4/7. Functionally, involved in the biosynthesis of the chorismate, which leads to the biosynthesis of aromatic amino acids. Catalyzes the reversible NADPH linked reduction of 3-dehydroshikimate (DHSA) to yield shikimate (SA). The chain is Shikimate dehydrogenase (NADP(+)) from Desulfitobacterium hafniense (strain Y51).